A 297-amino-acid chain; its full sequence is ATP phosphoribosyltransferase (297 aa).

At methionine 1 the chain carries N-acetylmethionine.

This sequence belongs to the ATP phosphoribosyltransferase family.

The protein localises to the cytoplasm. It catalyses the reaction 1-(5-phospho-beta-D-ribosyl)-ATP + diphosphate = 5-phospho-alpha-D-ribose 1-diphosphate + ATP. Its pathway is amino-acid biosynthesis; L-histidine biosynthesis; L-histidine from 5-phospho-alpha-D-ribose 1-diphosphate: step 1/9. Functionally, catalyzes the condensation of ATP and 5-phosphoribose 1-diphosphate to form N'-(5'-phosphoribosyl)-ATP (PR-ATP). Has a crucial role in the pathway because the rate of histidine biosynthesis seems to be controlled primarily by regulation of the enzymatic activity. In Saccharomyces cerevisiae (strain ATCC 204508 / S288c) (Baker's yeast), this protein is ATP phosphoribosyltransferase (HIS1).